A 68-amino-acid polypeptide reads, in one-letter code: Putative membrane protein insertion efficiency factor (68 aa).

The protein belongs to the UPF0161 family.

The protein localises to the cell inner membrane. In terms of biological role, could be involved in insertion of integral membrane proteins into the membrane. This Aquifex aeolicus (strain VF5) protein is Putative membrane protein insertion efficiency factor.